The following is a 489-amino-acid chain: Ribonuclease G (489 aa).

Positions 39-128 constitute an S1 motif domain; that stretch reads GNIYKGRVSR…LTTDITLPSR (90 aa). The Mg(2+) site is built by D304 and D347.

It belongs to the RNase E/G family. RNase G subfamily. As to quaternary structure, homodimer, and possible higher multimers. Mg(2+) serves as cofactor.

It is found in the cytoplasm. Functionally, acts in the processing of the 5'-end of precursors of 16S rRNA. Confers adaptive resistance to aminoglycoside antibiotics through modulation of 16S rRNA processing. An endoribonuclease, it prefers 5'-monophosphorylated substrates and cleaves single-stranded sites rich in A and U residues; also contributes to 23S rRNA processing, tRNA processing and mRNA turnover. Involved in decay of speF mRNA, has a preference for adenine nucleotides. This Salmonella typhimurium (strain SL1344) protein is Ribonuclease G.